A 432-amino-acid chain; its full sequence is MFLPSTTNHSSAPLQKHLCLFCTFWALLFGSHGDNSVQEDFAESMLLFFADAEGYFAACTTDTTMNSSLSEPLYVPVKFHDLPSEKPESTNIDTEKTPKKSRVRFSNIMEIRQLPSSHALEAKLSRMSYPVKEQESILKTVGKLTATQVAKISFFFCFVWFLANLSYQEALSDTQVAIVNILSSTSGLFTLILAAVFPSNSGDRFTLSKLLAVILSIGGVVLVNLSGSEKSAGRNTIGSIWSLAGAMLYAVYIVMIKRKVDREDKLDIPMFFGFVGLFNLLLLWPGFFLLHYTGFEDFEFPNKVVLMCIIINGLIGTVLSEFLWLWGCFLTSSLIGTLALSLTIPLSIIADMCMQKVQFSWLFFAGAIPVFFSFFIVTLLCHYNNWDPVMVGIRRIFAFICRKHRIQRVPEDSEQCESLISMHSVSQEDGAS.

The first 33 residues, methionine 1 to glycine 33, serve as a signal peptide directing secretion. Serine 116 is subject to Phosphoserine. Helical transmembrane passes span isoleucine 152–serine 172, alanine 177–phenylalanine 197, phenylalanine 205–leucine 225, threonine 236–isoleucine 256, methionine 270–leucine 290, valine 304–tryptophan 324, phenylalanine 329–isoleucine 349, and tryptophan 361–cysteine 381. An EamA domain is found at phenylalanine 161–leucine 225.

This sequence belongs to the SLC35F solute transporter family.

It is found in the membrane. Its function is as follows. Putative solute transporter. The protein is Solute carrier family 35 member F5 (SLC35F5) of Macaca fascicularis (Crab-eating macaque).